The sequence spans 402 residues: Speedy protein E2 (402 aa).

The tract at residues M1–E89 is disordered. Positions G16 to Y39 are enriched in polar residues. The span at D76–E89 shows a compositional bias: acidic residues.

This sequence belongs to the Speedy/Ringo family.

In Homo sapiens (Human), this protein is Speedy protein E2 (SPDYE2).